The following is a 178-amino-acid chain: MARLKTRYNEELKAKLQQELGIKNVMEIPRITKITLNMGVGAAATDKKLLDGAVADMQLIAGQKPVVTLARKSIAGFKIRDGWPIGCKVTLRGEQMYEFLDRLISIAIPRIRDFRGFSSKSFDGRGNYSMGLKEQIVFPEIDFDKIDRIRGMDITITTTARTDDEGRALMRTFGFPFK.

The protein belongs to the universal ribosomal protein uL5 family. Part of the 50S ribosomal subunit; part of the 5S rRNA/L5/L18/L25 subcomplex. Contacts the 5S rRNA and the P site tRNA. Forms a bridge to the 30S subunit in the 70S ribosome.

In terms of biological role, this is one of the proteins that bind and probably mediate the attachment of the 5S RNA into the large ribosomal subunit, where it forms part of the central protuberance. In the 70S ribosome it contacts protein S13 of the 30S subunit (bridge B1b), connecting the 2 subunits; this bridge is implicated in subunit movement. Contacts the P site tRNA; the 5S rRNA and some of its associated proteins might help stabilize positioning of ribosome-bound tRNAs. In Acinetobacter baylyi (strain ATCC 33305 / BD413 / ADP1), this protein is Large ribosomal subunit protein uL5.